Consider the following 427-residue polypeptide: Enolase (427 aa).

Residue Gln163 participates in (2R)-2-phosphoglycerate binding. The active-site Proton donor is Glu205. 3 residues coordinate Mg(2+): Asp242, Glu285, and Asp312. Residues Lys337, Arg366, Ser367, and Lys388 each coordinate (2R)-2-phosphoglycerate. Lys337 serves as the catalytic Proton acceptor.

It belongs to the enolase family. It depends on Mg(2+) as a cofactor.

The protein resides in the cytoplasm. Its subcellular location is the secreted. It is found in the cell surface. It catalyses the reaction (2R)-2-phosphoglycerate = phosphoenolpyruvate + H2O. It functions in the pathway carbohydrate degradation; glycolysis; pyruvate from D-glyceraldehyde 3-phosphate: step 4/5. Functionally, catalyzes the reversible conversion of 2-phosphoglycerate (2-PG) into phosphoenolpyruvate (PEP). It is essential for the degradation of carbohydrates via glycolysis. The protein is Enolase of Nitrosospira multiformis (strain ATCC 25196 / NCIMB 11849 / C 71).